The following is a 192-amino-acid chain: Ribose 1,5-bisphosphate phosphokinase PhnN (192 aa).

The protein belongs to the ribose 1,5-bisphosphokinase family.

It catalyses the reaction alpha-D-ribose 1,5-bisphosphate + ATP = 5-phospho-alpha-D-ribose 1-diphosphate + ADP. It functions in the pathway metabolic intermediate biosynthesis; 5-phospho-alpha-D-ribose 1-diphosphate biosynthesis; 5-phospho-alpha-D-ribose 1-diphosphate from D-ribose 5-phosphate (route II): step 3/3. Its function is as follows. Catalyzes the phosphorylation of ribose 1,5-bisphosphate to 5-phospho-D-ribosyl alpha-1-diphosphate (PRPP). The protein is Ribose 1,5-bisphosphate phosphokinase PhnN of Achromobacter xylosoxidans (strain A8).